The sequence spans 358 residues: Phospho-N-acetylmuramoyl-pentapeptide-transferase (358 aa).

10 consecutive transmembrane segments (helical) span residues 27-47 (IYAM…VIRV), 73-93 (TMGG…WADL), 97-117 (YIWT…VDDY), 134-154 (MFWQ…KPGF), 170-190 (LWFW…NAVN), 197-217 (GLAI…SYVA), 233-253 (GAGE…GFLW), 261-281 (VFMG…IAVI), 286-306 (ILLV…IFQV), and 335-355 (KIIV…ISTL).

This sequence belongs to the glycosyltransferase 4 family. MraY subfamily. The cofactor is Mg(2+).

It is found in the cell inner membrane. The enzyme catalyses UDP-N-acetyl-alpha-D-muramoyl-L-alanyl-gamma-D-glutamyl-meso-2,6-diaminopimeloyl-D-alanyl-D-alanine + di-trans,octa-cis-undecaprenyl phosphate = di-trans,octa-cis-undecaprenyl diphospho-N-acetyl-alpha-D-muramoyl-L-alanyl-D-glutamyl-meso-2,6-diaminopimeloyl-D-alanyl-D-alanine + UMP. Its pathway is cell wall biogenesis; peptidoglycan biosynthesis. Its function is as follows. Catalyzes the initial step of the lipid cycle reactions in the biosynthesis of the cell wall peptidoglycan: transfers peptidoglycan precursor phospho-MurNAc-pentapeptide from UDP-MurNAc-pentapeptide onto the lipid carrier undecaprenyl phosphate, yielding undecaprenyl-pyrophosphoryl-MurNAc-pentapeptide, known as lipid I. The chain is Phospho-N-acetylmuramoyl-pentapeptide-transferase from Pelobacter propionicus (strain DSM 2379 / NBRC 103807 / OttBd1).